We begin with the raw amino-acid sequence, 422 residues long: Serine--tRNA ligase (422 aa).

230–232 (TAE) provides a ligand contact to L-serine. Residue 261 to 263 (RAE) participates in ATP binding. Glutamate 284 is an L-serine binding site. 348–351 (EISS) contributes to the ATP binding site. Position 383 (serine 383) interacts with L-serine.

This sequence belongs to the class-II aminoacyl-tRNA synthetase family. Type-1 seryl-tRNA synthetase subfamily. Homodimer. The tRNA molecule binds across the dimer.

It is found in the cytoplasm. It catalyses the reaction tRNA(Ser) + L-serine + ATP = L-seryl-tRNA(Ser) + AMP + diphosphate + H(+). The enzyme catalyses tRNA(Sec) + L-serine + ATP = L-seryl-tRNA(Sec) + AMP + diphosphate + H(+). The protein operates within aminoacyl-tRNA biosynthesis; selenocysteinyl-tRNA(Sec) biosynthesis; L-seryl-tRNA(Sec) from L-serine and tRNA(Sec): step 1/1. Its function is as follows. Catalyzes the attachment of serine to tRNA(Ser). Is also able to aminoacylate tRNA(Sec) with serine, to form the misacylated tRNA L-seryl-tRNA(Sec), which will be further converted into selenocysteinyl-tRNA(Sec). This Pelotomaculum thermopropionicum (strain DSM 13744 / JCM 10971 / SI) protein is Serine--tRNA ligase.